We begin with the raw amino-acid sequence, 524 residues long: 2-isopropylmalate synthase (524 aa).

Residues 12–274 (VIIFDTTLRD…WNRIETTMLT (263 aa)) enclose the Pyruvate carboxyltransferase domain. D21, H209, H211, and N245 together coordinate Mn(2+). Residues 398–524 (KLMSLTVIAG…EDAPTVAVAG (127 aa)) form a regulatory domain region.

This sequence belongs to the alpha-IPM synthase/homocitrate synthase family. LeuA type 1 subfamily. Homodimer. The cofactor is Mn(2+).

It localises to the cytoplasm. The enzyme catalyses 3-methyl-2-oxobutanoate + acetyl-CoA + H2O = (2S)-2-isopropylmalate + CoA + H(+). Its pathway is amino-acid biosynthesis; L-leucine biosynthesis; L-leucine from 3-methyl-2-oxobutanoate: step 1/4. Its function is as follows. Catalyzes the condensation of the acetyl group of acetyl-CoA with 3-methyl-2-oxobutanoate (2-ketoisovalerate) to form 3-carboxy-3-hydroxy-4-methylpentanoate (2-isopropylmalate). The chain is 2-isopropylmalate synthase from Rhodopseudomonas palustris (strain TIE-1).